The chain runs to 271 residues: RELT-like protein 1 (271 aa).

The N-terminal stretch at 1–23 (MAPRGLPGSAVLAAAVFVGGAVS) is a signal peptide. Over 24–57 (SPLVRSDHSGSHPLPSKTETTPSPTNNNGNGHPE) the chain is Extracellular. The interval 27 to 52 (VRSDHSGSHPLPSKTETTPSPTNNNG) is disordered. A compositionally biased stretch (low complexity) spans 36 to 52 (PLPSKTETTPSPTNNNG). Residues 58–78 (YIAYALVPVFFVMGLFGVLIC) traverse the membrane as a helical segment. The Cytoplasmic portion of the chain corresponds to 79–271 (HLLKKKGYRC…PVKRQQSDSE (193 aa)). Phosphoserine is present on residues serine 109 and serine 114. Disordered regions lie at residues 144–168 (CDPESPVTPSTPGSPPVSPGPLSPG) and 231–271 (TKVE…SDSE). Positions 155–165 (PGSPPVSPGPL) are enriched in pro residues. Over residues 231 to 244 (TKVEPKSNQKERRS) the composition is skewed to basic and acidic residues. A phosphoserine mark is found at serine 244 and serine 247.

It belongs to the RELT family. As to quaternary structure, interacts with RELT, RELL2, OXSR1 and PLSCR1.

It localises to the cell membrane. In terms of biological role, induces activation of MAPK14/p38 cascade, when overexpressed. Induces apoptosis, when overexpressed. The polypeptide is RELT-like protein 1 (RELL1) (Bos taurus (Bovine)).